The following is an 862-amino-acid chain: MAQPGPAPQPDVSLQQRVAELEKINAEFLRAQQQLEQEFNQKRAKFKELYLAKEEDLKRQNAVLQAAQDDLGHLRTQLWEAQAEMENIKAIATVSENTKQEAIDEVKRQWREEVASLQAVMKETVRDYEHQFHLRLEQERAQWAQYRESADREIADLRRRLSEGQEEENLENEMKKAQEDAEKLRSVVMPMEKEIAALKDKLTEAEDKIKELEASKVKELNHYLEAEKSCRTDLEMYVAVLNTQKSVLQEDAEKLRKELHEVCHLLEQERQQHNQLKHTWQKANDQFLESQRLLMRDMQRMEIVLTSEQLRQVEELKKKDQEEDEQQRINKGKDNKKIDTEEEVKIPVVCALTQEESSTPLSNEEEHLDSTHGSVHSLDADLLLPSGDPFSKSDNDMFKEGLRRAQSTDSLGTSSSLQSKALGYNYKAKSAGNLDESDFGPLVGADSVSENFDTVSLGSLQMPSGFMLTKDQERAIKAMTPEQEETASLLSSVTQGMESAYVSPSGYRLVSETEWNLLQKEVHNAGNKLGRRCDMCSNYEKQLQGIQIQEAETRDQVKKLQLMLRQANDQLEKTMKEKQELEDFLRQSAEDSSHQISALVLRAQASEVLLEELQQSFSQAKRDVQEQMAVLMQSREQVSEELVRLQKDNDSLQGKHSLHVSLQLAEDFILPDTVQVLRELVLKYRENIVHVRTAADHMEEKLKAEILFLKEQIQAEQCLKENLEETLQLEIENCKEEIASISSLKAELERIKVEKGQLESTLREKSQQLESLQEIKVNLEEQLKKETAAKATVEQLMFEEKNKAQRLQTELDVSEQVQRDFVKLSQTLQVQLERIRQADSLERIRAILNDTKLTDINQLPET.

Ala-2 is subject to N-acetylalanine. A coiled-coil region spans residues 11–328; the sequence is DVSLQQRVAE…KDQEEDEQQR (318 aa). Position 282 is an N6-acetyllysine (Lys-282). Disordered regions lie at residues 315 to 340 and 355 to 374; these read ELKK…KIDT and EESS…THGS. A phosphoserine mark is found at Ser-374, Ser-377, and Ser-407. A Phosphothreonine modification is found at Thr-408. Phosphoserine is present on Ser-410. Positions 534–816 form a coiled coil; sequence DMCSNYEKQL…LQTELDVSEQ (283 aa).

Belongs to the rabaptin family. As to quaternary structure, heterodimer with RABGEF1. The heterodimer binds RAB4A and RAB5A that have been activated by GTP-binding. Interacts with TSC2. Interacts with GGA1 (via GAE domain), GGA2 (via GAE domain) and GGA3 (via GAE domain). Interacts with AP1G1 (via GAE domain). Interacts with AP1G2 (via GAE domain). Interacts with ECPAS. Interacts with KCNH1. Interacts with PKD1 (via C-terminal domain) and GGA1; the interactions recruit PKD1:PKD2 complex to GGA1 and ARL3 at trans-Golgi network. Interacts with KCNH1. Proteolytic cleavage by caspases in apoptotic cells causes loss of endosome fusion activity.

The protein localises to the cytoplasm. Its subcellular location is the early endosome. It is found in the recycling endosome. The protein resides in the cytoplasmic vesicle. Rab effector protein acting as linker between gamma-adaptin, RAB4A and RAB5A. Involved in endocytic membrane fusion and membrane trafficking of recycling endosomes. Involved in KCNH1 channels trafficking to and from the cell membrane. Stimulates RABGEF1 mediated nucleotide exchange on RAB5A. Mediates the traffic of PKD1:PKD2 complex from the endoplasmic reticulum through the Golgi to the cilium. This is Rab GTPase-binding effector protein 1 (Rabep1) from Rattus norvegicus (Rat).